A 135-amino-acid chain; its full sequence is Basic phospholipase A2 10 (135 aa).

Disulfide bonds link cysteine 28/cysteine 87, cysteine 42/cysteine 134, cysteine 44/cysteine 60, cysteine 59/cysteine 115, cysteine 66/cysteine 108, cysteine 76/cysteine 101, and cysteine 94/cysteine 106. Positions 43, 45, and 47 each coordinate Ca(2+). Histidine 63 is a catalytic residue. Position 64 (aspartate 64) interacts with Ca(2+). Aspartate 109 is an active-site residue.

This sequence belongs to the phospholipase A2 family. Group I subfamily. D49 sub-subfamily. Requires Ca(2+) as cofactor. In terms of tissue distribution, expressed by the venom gland.

It is found in the secreted. The catalysed reaction is a 1,2-diacyl-sn-glycero-3-phosphocholine + H2O = a 1-acyl-sn-glycero-3-phosphocholine + a fatty acid + H(+). In terms of biological role, snake venom phospholipase A2 (PLA2) that inhibits neuromuscular transmission by blocking acetylcholine release from the nerve termini. PLA2 catalyzes the calcium-dependent hydrolysis of the 2-acyl groups in 3-sn-phosphoglycerides. The protein is Basic phospholipase A2 10 of Bungarus fasciatus (Banded krait).